We begin with the raw amino-acid sequence, 171 residues long: Cytochrome c oxidase subunit 5b-2, mitochondrial (171 aa).

Residues 1-54 (MWRRIVSSHLKSISAVGSCAAPSCRHAVVESTHLSLSTRASSIPAYSSIFSRLI) constitute a mitochondrion transit peptide. 3 residues coordinate Zn(2+): C121, C145, and C148.

This sequence belongs to the cytochrome c oxidase subunit 5B (TC 3.D.4.11) family.

The protein resides in the mitochondrion inner membrane. In terms of biological role, this protein is one of the nuclear-coded polypeptide chains of cytochrome c oxidase, the terminal oxidase in mitochondrial electron transport. In Arabidopsis thaliana (Mouse-ear cress), this protein is Cytochrome c oxidase subunit 5b-2, mitochondrial (COX5B-2).